The following is a 501-amino-acid chain: 1-aminocyclopropane-1-carboxylate synthase-like protein 1 (501 aa).

Position 105 (Glu-105) interacts with substrate. The residue at position 323 (Lys-323) is an N6-(pyridoxal phosphate)lysine. Residues 480-501 (GKSQVAEDPRPSQSQEPSDQRR) form a disordered region. The span at 490–501 (PSQSQEPSDQRR) shows a compositional bias: polar residues.

The protein belongs to the class-I pyridoxal-phosphate-dependent aminotransferase family.

Functionally, does not catalyze the synthesis of 1-aminocyclopropane-1-carboxylate but is capable of catalyzing the deamination of L-vinylglycine. This is 1-aminocyclopropane-1-carboxylate synthase-like protein 1 (ACCS) from Homo sapiens (Human).